We begin with the raw amino-acid sequence, 336 residues long: Dihydroorotate dehydrogenase (quinone) (336 aa).

FMN is bound by residues 62-66 (AGLDK) and Thr86. Lys66 contributes to the substrate binding site. Position 111 to 115 (111 to 115 (NRMGF)) interacts with substrate. Asn139 and Asn172 together coordinate FMN. Asn172 is a substrate binding site. Ser175 functions as the Nucleophile in the catalytic mechanism. Asn177 serves as a coordination point for substrate. FMN contacts are provided by Lys217 and Thr245. 246 to 247 (NT) serves as a coordination point for substrate. Residues Gly268, Gly297, and 318–319 (YS) contribute to the FMN site.

Belongs to the dihydroorotate dehydrogenase family. Type 2 subfamily. As to quaternary structure, monomer. FMN serves as cofactor.

It localises to the cell membrane. The catalysed reaction is (S)-dihydroorotate + a quinone = orotate + a quinol. The protein operates within pyrimidine metabolism; UMP biosynthesis via de novo pathway; orotate from (S)-dihydroorotate (quinone route): step 1/1. In terms of biological role, catalyzes the conversion of dihydroorotate to orotate with quinone as electron acceptor. The chain is Dihydroorotate dehydrogenase (quinone) from Pectobacterium carotovorum subsp. carotovorum (strain PC1).